The primary structure comprises 55 residues: uncharacterized protein (55 aa).

This is an uncharacterized protein from Mycobacterium tuberculosis (strain ATCC 25618 / H37Rv).